Here is a 467-residue protein sequence, read N- to C-terminus: 55 kDa erythrocyte membrane protein (467 aa).

Positions 73–154 constitute a PDZ domain; that stretch reads EVAFEKNQSE…VVTMKIIPRP (82 aa). Positions 160-230 constitute an SH3 domain; the sequence is PCEMYMRGQF…PSPELQEWRA (71 aa). One can recognise a Guanylate kinase-like domain in the interval 283–452; it reads RKTLVLIGAP…SVKIVEEALE (170 aa).

This sequence belongs to the MAGUK family. Post-translationally, extensively palmitoylated.

It is found in the membrane. Functionally, may play a role in the regulation of neutrophil polarization. The chain is 55 kDa erythrocyte membrane protein (mpp1) from Takifugu rubripes (Japanese pufferfish).